We begin with the raw amino-acid sequence, 1047 residues long: Protein HIRA homolog (1047 aa).

WD repeat units follow at residues 11–53 (HDDK…SDKA), 68–107 (QHLACVNCVRWSQNGQNLASGSDDKLIMIWRKSAGSSGVF), 127–166 (GHDGDVLDLAWSPNDVYLASCSIDNTVIIWDAQAFPHSVA), 170–209 (GHTGLVKGVSWDPLGRFLASQSDDRSIKIWNTMNWSLSHT), 218–263 (GGTT…KDFV), 264–319 (GHRK…PMVV), and 323–364 (LFNA…KAIS). 4 disordered regions span residues 401–435 (QGDKPTKFPLSNNNEANQRPISKQTETRTKDGKRR), 509–549 (KTQP…PSNL), 882–914 (FATPAPPQQKTASSAGSSPRSGEATGEEVTEKD), and 933–1047 (TGTS…TDQT). Composition is skewed to polar residues over residues 409 to 424 (PLSNNNEANQRPISKQ) and 509 to 518 (KTQPASQRRQ). Ser-519 carries the post-translational modification Phosphoserine. Positions 889 to 901 (QQKTASSAGSSPR) are enriched in polar residues. 2 stretches are compositionally biased toward low complexity: residues 933–972 (TGTSTTTTTTASSSLSSSGSSSSTSGSGSSSSSSSTSSLS) and 1015–1047 (VSPASTSGGAASTSPAASVAGSAPVSSSKTDQT).

Belongs to the WD repeat HIR1 family.

The protein resides in the nucleus. Required for the periodic repression of histone gene transcription during the cell cycle. Required for replication-independent chromatin assembly. Promotes remodeling of sperm chromatin following fertilization via the incorporation of histone H3.3 and histone H4. This is Protein HIRA homolog (Hira) from Drosophila melanogaster (Fruit fly).